Here is a 124-residue protein sequence, read N- to C-terminus: Galanin peptides (124 aa).

Positions 1-19 (MARGSVILLGWLLLVVTLS) are cleaved as a signal peptide. The propeptide occupies 20–30 (ATLGLGMPAKE). T61 is modified (threonine amide). 2 positions are modified to phosphoserine: S117 and S118.

Belongs to the galanin family. In terms of tissue distribution, expressed in retinal progenitor cells and retinal ganglion cells (at protein level).

The protein localises to the secreted. Functionally, endocrine hormone of the central and peripheral nervous systems that binds and activates the G protein-coupled receptors GALR1, GALR2, and GALR3. This small neuropeptide may regulate diverse physiologic functions including contraction of smooth muscle of the gastrointestinal and genitourinary tract, growth hormone and insulin release and adrenal secretion. This is Galanin peptides (Gal) from Mus musculus (Mouse).